The primary structure comprises 348 residues: D-alanine--D-alanine ligase (348 aa).

The ATP-grasp domain occupies 136 to 344; that stretch reads KSVFKSYNLP…LEKLVANLIE (209 aa). 171 to 226 is an ATP binding site; sequence NKIISYPCFIKPANLGSSVGITKAYSKEEFIAGIEFAAKYDERIIVEKSIEGRELE. Residues Asp297, Glu311, and Asn313 each coordinate Mg(2+).

Belongs to the D-alanine--D-alanine ligase family. Mg(2+) is required as a cofactor. It depends on Mn(2+) as a cofactor.

It is found in the cytoplasm. The enzyme catalyses 2 D-alanine + ATP = D-alanyl-D-alanine + ADP + phosphate + H(+). It functions in the pathway cell wall biogenesis; peptidoglycan biosynthesis. Cell wall formation. This chain is D-alanine--D-alanine ligase, found in Prochlorococcus marinus (strain NATL2A).